Here is a 428-residue protein sequence, read N- to C-terminus: Homocitrate synthase, cytosolic isozyme (428 aa).

The Pyruvate carboxyltransferase domain maps to 23–276 (FQLIDSTLRE…KSKYKLHKIR (254 aa)). 2-oxoglutarate is bound at residue arginine 31. Residue glutamate 32 participates in Mg(2+) binding. Positions 91, 151, and 185 each coordinate 2-oxoglutarate. 2 residues coordinate Mg(2+): histidine 212 and histidine 214. Histidine 309 (proton acceptor) is an active-site residue. Position 385 is a phosphoserine (serine 385). Position 396 is a phosphothreonine (threonine 396). The disordered stretch occupies residues 399-428 (VLSAKKNKKNDSDVPELATIPAAKRTKPSA). Serine 401 and serine 410 each carry phosphoserine.

This sequence belongs to the alpha-IPM synthase/homocitrate synthase family. Homocitrate synthase LYS20/LYS21 subfamily. Mg(2+) serves as cofactor. Mn(2+) is required as a cofactor.

Its subcellular location is the cytoplasm. The enzyme catalyses acetyl-CoA + 2-oxoglutarate + H2O = (2R)-homocitrate + CoA + H(+). It functions in the pathway amino-acid biosynthesis; L-lysine biosynthesis via AAA pathway; L-alpha-aminoadipate from 2-oxoglutarate: step 1/5. Functionally, catalyzes the aldol-type condensation of 2-oxoglutarate with acetyl-CoA to yield homocitrate. Carries out the first step of the alpha-aminoadipate (AAA) lysine biosynthesis pathway. The protein is Homocitrate synthase, cytosolic isozyme (LYS20) of Saccharomyces cerevisiae (strain ATCC 204508 / S288c) (Baker's yeast).